The primary structure comprises 388 residues: Succinyl-diaminopimelate desuccinylase (388 aa).

Residue H72 participates in Zn(2+) binding. D74 is an active-site residue. D105 is a binding site for Zn(2+). E139 serves as the catalytic Proton acceptor. E140, E168, and H353 together coordinate Zn(2+).

Belongs to the peptidase M20A family. DapE subfamily. As to quaternary structure, homodimer. It depends on Zn(2+) as a cofactor. Co(2+) serves as cofactor.

It carries out the reaction N-succinyl-(2S,6S)-2,6-diaminopimelate + H2O = (2S,6S)-2,6-diaminopimelate + succinate. It functions in the pathway amino-acid biosynthesis; L-lysine biosynthesis via DAP pathway; LL-2,6-diaminopimelate from (S)-tetrahydrodipicolinate (succinylase route): step 3/3. Catalyzes the hydrolysis of N-succinyl-L,L-diaminopimelic acid (SDAP), forming succinate and LL-2,6-diaminopimelate (DAP), an intermediate involved in the bacterial biosynthesis of lysine and meso-diaminopimelic acid, an essential component of bacterial cell walls. The polypeptide is Succinyl-diaminopimelate desuccinylase (Orientia tsutsugamushi (strain Boryong) (Rickettsia tsutsugamushi)).